Reading from the N-terminus, the 323-residue chain is Biotin synthase (323 aa).

The Radical SAM core domain occupies 46–264; it reads TEIQLSSLLS…IAVARITMPR (219 aa). Positions 61, 65, and 68 each coordinate [4Fe-4S] cluster. [2Fe-2S] cluster-binding residues include C105, C136, C196, and R268.

This sequence belongs to the radical SAM superfamily. Biotin synthase family. As to quaternary structure, homodimer. The cofactor is [4Fe-4S] cluster. It depends on [2Fe-2S] cluster as a cofactor.

It catalyses the reaction (4R,5S)-dethiobiotin + (sulfur carrier)-SH + 2 reduced [2Fe-2S]-[ferredoxin] + 2 S-adenosyl-L-methionine = (sulfur carrier)-H + biotin + 2 5'-deoxyadenosine + 2 L-methionine + 2 oxidized [2Fe-2S]-[ferredoxin]. Its pathway is cofactor biosynthesis; biotin biosynthesis; biotin from 7,8-diaminononanoate: step 2/2. Functionally, catalyzes the conversion of dethiobiotin (DTB) to biotin by the insertion of a sulfur atom into dethiobiotin via a radical-based mechanism. This Bordetella avium (strain 197N) protein is Biotin synthase.